The following is a 358-amino-acid chain: C-X-C chemokine receptor type 4-B (358 aa).

An important for chemokine binding and signaling region spans residues 1–25; the sequence is MDGFSGGIDINIFDGNSTENGSGDF. The Extracellular portion of the chain corresponds to 1–44; sequence MDGFSGGIDINIFDGNSTENGSGDFEDFIEPCFMQENSDFNRIF. N-linked (GlcNAc...) asparagine glycosylation is found at Asn16 and Asn20. 2 disulfide bridges follow: Cys32–Cys281 and Cys113–Cys190. Residues 45-67 traverse the membrane as a helical segment; that stretch reads LPTIYSFIFLLGIIGNGLVVVVM. The Cytoplasmic segment spans residues 68-81; it reads GYQKKSRTMTDKYR. Residues 82 to 103 traverse the membrane as a helical segment; sequence LHLSVADLLFVFTLPFWSVDAA. Positions 98-101 are chemokine binding; sequence WSVD. Topologically, residues 104–114 are extracellular; it reads IGWYFKEFLCK. Residues 115-134 form a helical membrane-spanning segment; the sequence is AVHVIYTVNLYSSVLILAFI. Residues 117-121 are chemokine binding; the sequence is HVIYT. Topologically, residues 135 to 158 are cytoplasmic; the sequence is SLDRYLAIVHATNSQGSRKMLADK. An involved in dimerization; when bound to chemokine region spans residues 139–151; it reads YLAIVHATNSQGS. Residues 159–178 form a helical membrane-spanning segment; sequence VVYAGVWLPALLLTVPDLVF. Over 179 to 202 the chain is Extracellular; the sequence is ASVSNENGQFVCDRIYPIDNRETW. The chemokine binding, important for signaling stretch occupies residues 190 to 194; sequence CDRIY. The helical transmembrane segment at 203–223 threads the bilayer; it reads TVGFRFLHITVGLILPGLIIL. Over 224 to 248 the chain is Cytoplasmic; it reads VCYCVIISKLSHSKGHQKRKALKTT. A helical transmembrane segment spans residues 249 to 268; the sequence is VILILAFFACWLPYYVCLTT. Topologically, residues 269-289 are extracellular; the sequence is DTFMMLGLVKADCIWENTLHK. A helical membrane pass occupies residues 290–309; sequence AISITEALAFFHCCLNPILY. Residues 310 to 358 are Cytoplasmic-facing; sequence AFLGAKFKKSAQNAFTSVSRGSSLKILSKKRAGLSSVSTESESSSFHSS. Residues 338 to 358 form a disordered region; it reads KKRAGLSSVSTESESSSFHSS. Residues 344–358 are compositionally biased toward low complexity; that stretch reads SSVSTESESSSFHSS.

The protein belongs to the G-protein coupled receptor 1 family. As to quaternary structure, monomer. Can form dimers. Sulfation is required for efficient binding of cxcl12/sdf-1alpha and promotes its dimerization. In terms of processing, O- and N-glycosylated.

It is found in the cell membrane. It localises to the cytoplasm. The protein resides in the nucleus. Its subcellular location is the early endosome. The protein localises to the late endosome. It is found in the lysosome. Its function is as follows. Receptor for the C-X-C chemokine cxcl12/sdf-1. Transduces a signal by increasing the intracellular level of calcium ions. Signaling with cxcl12/sdf-1 mediates the directional movement of mesodermal cells during gastrulation. May play a role in the migration of embryonic presumptive primordial germ cells (pPGCs). May also be involved in regulating migration of hematopoietic stem cells into the larval liver. The protein is C-X-C chemokine receptor type 4-B (cxcr4-b) of Xenopus laevis (African clawed frog).